We begin with the raw amino-acid sequence, 427 residues long: Ribosomal protein uS12 methylthiotransferase RimO (427 aa).

The MTTase N-terminal domain occupies 1 to 116 (MNFYVEVLGC…IATHIGKRNV (116 aa)). [4Fe-4S] cluster contacts are provided by C10, C46, C79, C145, C149, and C152. Residues 131–360 (VDNGQYAYVK…MDIQSQISFE (230 aa)) form the Radical SAM core domain. Positions 363–426 (EKLVGKKLKV…IYDLEGEIVE (64 aa)) constitute a TRAM domain.

Belongs to the methylthiotransferase family. RimO subfamily. It depends on [4Fe-4S] cluster as a cofactor.

The protein localises to the cytoplasm. It carries out the reaction L-aspartate(89)-[ribosomal protein uS12]-hydrogen + (sulfur carrier)-SH + AH2 + 2 S-adenosyl-L-methionine = 3-methylsulfanyl-L-aspartate(89)-[ribosomal protein uS12]-hydrogen + (sulfur carrier)-H + 5'-deoxyadenosine + L-methionine + A + S-adenosyl-L-homocysteine + 2 H(+). In terms of biological role, catalyzes the methylthiolation of an aspartic acid residue of ribosomal protein uS12. The protein is Ribosomal protein uS12 methylthiotransferase RimO of Thermosipho melanesiensis (strain DSM 12029 / CIP 104789 / BI429).